Reading from the N-terminus, the 29-residue chain is Dermaseptin-1.2TR (29 aa).

V29 bears the Valine amide mark.

As to expression, expressed by the skin glands.

The protein localises to the secreted. Its function is as follows. Has antimicrobial activity. This chain is Dermaseptin-1.2TR, found in Phyllomedusa trinitatis (Trinidad leaf frog).